A 304-amino-acid chain; its full sequence is UDP-3-O-acyl-N-acetylglucosamine deacetylase (304 aa).

Zn(2+) contacts are provided by histidine 77, histidine 233, and aspartate 237. Residue histidine 260 is the Proton donor of the active site.

It belongs to the LpxC family. Zn(2+) serves as cofactor.

It carries out the reaction a UDP-3-O-[(3R)-3-hydroxyacyl]-N-acetyl-alpha-D-glucosamine + H2O = a UDP-3-O-[(3R)-3-hydroxyacyl]-alpha-D-glucosamine + acetate. Its pathway is glycolipid biosynthesis; lipid IV(A) biosynthesis; lipid IV(A) from (3R)-3-hydroxytetradecanoyl-[acyl-carrier-protein] and UDP-N-acetyl-alpha-D-glucosamine: step 2/6. In terms of biological role, catalyzes the hydrolysis of UDP-3-O-myristoyl-N-acetylglucosamine to form UDP-3-O-myristoylglucosamine and acetate, the committed step in lipid A biosynthesis. This is UDP-3-O-acyl-N-acetylglucosamine deacetylase from Lawsonia intracellularis (strain PHE/MN1-00).